A 304-amino-acid chain; its full sequence is Voltage-dependent anion channel-forming protein YneE (304 aa).

The next 4 membrane-spanning stretches (helical) occupy residues Leu28–Leu48, Ile50–Phe70, Ala209–Leu229, and Tyr235–Ala255.

The protein belongs to the anion channel-forming bestrophin (TC 1.A.46) family.

The protein localises to the cell membrane. This Salmonella typhi protein is Voltage-dependent anion channel-forming protein YneE (yneE).